We begin with the raw amino-acid sequence, 259 residues long: tRNA-cytidine(32) 2-sulfurtransferase (259 aa).

Residues 40 to 45 (SGGKDS) carry the PP-loop motif motif. [4Fe-4S] cluster contacts are provided by Cys114, Cys117, and Cys205.

Belongs to the TtcA family. In terms of assembly, homodimer. The cofactor is Mg(2+). [4Fe-4S] cluster is required as a cofactor.

Its subcellular location is the cytoplasm. It carries out the reaction cytidine(32) in tRNA + S-sulfanyl-L-cysteinyl-[cysteine desulfurase] + AH2 + ATP = 2-thiocytidine(32) in tRNA + L-cysteinyl-[cysteine desulfurase] + A + AMP + diphosphate + H(+). Its pathway is tRNA modification. Functionally, catalyzes the ATP-dependent 2-thiolation of cytidine in position 32 of tRNA, to form 2-thiocytidine (s(2)C32). The sulfur atoms are provided by the cysteine/cysteine desulfurase (IscS) system. This is tRNA-cytidine(32) 2-sulfurtransferase from Bdellovibrio bacteriovorus (strain ATCC 15356 / DSM 50701 / NCIMB 9529 / HD100).